The primary structure comprises 362 residues: RNA-binding protein 48 (362 aa).

The RRM domain occupies 46–124 (WYLLIQGVPA…GLLHVCYAPE (79 aa)). The disordered stretch occupies residues 334-362 (EVISSVPKPPEDKVEDVHRSRPLKQRRRI). The span at 342–352 (PPEDKVEDVHR) shows a compositional bias: basic and acidic residues. Basic residues predominate over residues 353–362 (SRPLKQRRRI).

This sequence belongs to the RBM48 family. In terms of assembly, component of the minor spliceosome. Within this complex, interacts with ARMC7 and PRPF8/PRP8.

In terms of biological role, as a component of the minor spliceosome, involved in the splicing of U12-type introns in pre-mRNAs. This chain is RNA-binding protein 48 (RBM48), found in Bos taurus (Bovine).